A 138-amino-acid polypeptide reads, in one-letter code: Protein FAM136A (138 aa).

This sequence belongs to the FAM136 family.

The protein is Protein FAM136A (fam136a) of Xenopus tropicalis (Western clawed frog).